The chain runs to 345 residues: Probable deoxyhypusine synthase 2 (345 aa).

The active-site Nucleophile is the Lys292.

The protein belongs to the deoxyhypusine synthase family. The cofactor is NAD(+).

The enzyme catalyses [eIF5A protein]-L-lysine + spermidine = [eIF5A protein]-deoxyhypusine + propane-1,3-diamine. It participates in protein modification; eIF5A hypusination. In terms of biological role, catalyzes the NAD-dependent oxidative cleavage of spermidine and the subsequent transfer of the butylamine moiety of spermidine to the epsilon-amino group of a specific lysine residue of the eIF-5A precursor protein to form the intermediate deoxyhypusine residue. The sequence is that of Probable deoxyhypusine synthase 2 (dys2) from Methanosarcina mazei (strain ATCC BAA-159 / DSM 3647 / Goe1 / Go1 / JCM 11833 / OCM 88) (Methanosarcina frisia).